An 82-amino-acid polypeptide reads, in one-letter code: Auxin-induced protein X15 (82 aa).

It belongs to the ARG7 family.

In Glycine max (Soybean), this protein is Auxin-induced protein X15.